The following is a 484-amino-acid chain: Ribosome biogenesis protein NOP53 (484 aa).

Disordered stretches follow at residues 1–51 (MAAG…WRRL) and 304–356 (ESDG…AARK). An N-acetylalanine modification is found at A2. A Phosphoserine modification is found at S29. Basic residues predominate over residues 35 to 49 (RRRRRGPRNKKRGWR). The mediates interaction with CDKN2A/isoform tumor suppressor ARF stretch occupies residues 148–437 (KEELWEKLAK…SELSGSLRTL (290 aa)). S305 bears the Phosphoserine mark. Residues 336-348 (PEKRMEKKTEQQR) are compositionally biased toward basic and acidic residues. The tract at residues 348–392 (RRREKAARKLRVQQAALRAARLQHQELFRLRGIKAQVARRLAELA) is mediates interaction with human herpesvirus 8 protein ORF16. Nucleolar localization signal regions lie at residues 353–401 (AARK…RRIR) and 402–484 (RLAE…EIQL).

Belongs to the NOP53 family. In terms of assembly, homooligomer. Interacts with PTEN; regulates PTEN phosphorylation and increases its stability. Interacts with RPL11; retains RPL11 into the nucleolus. Interacts with CDKN2A/isoform tumor suppressor ARF; the interaction is direct and promotes ARF nucleoplasmic relocalization and ubiquitin-mediated proteasomal degradation. Interacts with NPM1; the interaction is direct and competitive with MYC. Interacts with NF2 (via FERM domain); the interaction is direct. Interacts with p53/TP53 (via the oligomerization region); the interaction is direct and may prevent the MDM2-mediated proteasomal degradation of p53/TP53. Interacts with RIGI; may regulate RIGI through USP15-mediated 'Lys-63'-linked deubiquitination. Interacts with UBTF. Ubiquitin-mediated proteasomal degradation is regulated by c-JUN. It is associated with relocalization to the nucleoplasm and decreased homooligomerization. Post-translationally, phosphorylated upon DNA damage probably by ATM and DNA-PK; may regulate NOP53 degradation.

Its subcellular location is the nucleus. It localises to the nucleolus. The protein resides in the nucleoplasm. Nucleolar protein which is involved in the integration of the 5S RNP into the ribosomal large subunit during ribosome biogenesis. In ribosome biogenesis, may also play a role in rRNA transcription. Also functions as a nucleolar sensor that regulates the activation of p53/TP53 in response to ribosome biogenesis perturbation, DNA damage and other stress conditions. DNA damage or perturbation of ribosome biogenesis disrupt the interaction between NOP53 and RPL11 allowing RPL11 transport to the nucleoplasm where it can inhibit MDM2 and allow p53/TP53 activation. It may also positively regulate the function of p53/TP53 in cell cycle arrest and apoptosis through direct interaction, preventing its MDM2-dependent ubiquitin-mediated proteasomal degradation. Originally identified as a tumor suppressor, it may also play a role in cell proliferation and apoptosis by positively regulating the stability of PTEN, thereby antagonizing the PI3K-AKT/PKB signaling pathway. May also inhibit cell proliferation and increase apoptosis through its interaction with NF2. May negatively regulate NPM1 by regulating its nucleoplasmic localization, oligomerization and ubiquitin-mediated proteasomal degradation. Thereby, may prevent NPM1 interaction with MYC and negatively regulate transcription mediated by the MYC-NPM1 complex. May also regulate cellular aerobic respiration. In the cellular response to viral infection, may play a role in the attenuation of interferon-beta through the inhibition of RIGI. This is Ribosome biogenesis protein NOP53 from Mus musculus (Mouse).